A 260-amino-acid chain; its full sequence is Chlorocatechol 1,2-dioxygenase (260 aa).

4 residues coordinate Fe cation: tyrosine 130, tyrosine 164, histidine 188, and histidine 190.

This sequence belongs to the intradiol ring-cleavage dioxygenase family. Requires Fe(3+) as cofactor.

The catalysed reaction is 3-chlorocatechol + O2 = (2E,4Z)-2-chloromuconate + 2 H(+). The enzyme catalyses 3,5-dichlorocatechol + O2 = (2E,4E)-2,4-dichloromuconate + 2 H(+). The protein operates within aromatic compound metabolism; 3-chlorocatechol degradation. In terms of biological role, preferentially converts 3-chlorocatechol and 3,5-dichlorocatechol as opposed to other chlorinated catechols. Retains diminished activity toward non-chlorinated substrates. This Pseudomonas putida (Arthrobacter siderocapsulatus) protein is Chlorocatechol 1,2-dioxygenase (clcA).